The sequence spans 832 residues: Alpha-glucan phosphorylase, H isozyme (832 aa).

K678 is subject to N6-(pyridoxal phosphate)lysine.

Belongs to the glycogen phosphorylase family. Requires pyridoxal 5'-phosphate as cofactor.

It is found in the cytoplasm. It catalyses the reaction [(1-&gt;4)-alpha-D-glucosyl](n) + phosphate = [(1-&gt;4)-alpha-D-glucosyl](n-1) + alpha-D-glucose 1-phosphate. In terms of biological role, phosphorylase is an important allosteric enzyme in carbohydrate metabolism. Enzymes from different sources differ in their regulatory mechanisms and in their natural substrates. However, all known phosphorylases share catalytic and structural properties. This is Alpha-glucan phosphorylase, H isozyme from Triticum aestivum (Wheat).